The following is a 275-amino-acid chain: 4-hydroxy-tetrahydrodipicolinate reductase (275 aa).

NAD(+)-binding positions include 13–18 and 108–110; these read GAAGKM and GTT. H164 serves as the catalytic Proton donor/acceptor. H165 contributes to the (S)-2,3,4,5-tetrahydrodipicolinate binding site. The active-site Proton donor is K168. Residue 174-175 participates in (S)-2,3,4,5-tetrahydrodipicolinate binding; the sequence is GT.

It belongs to the DapB family.

Its subcellular location is the cytoplasm. The catalysed reaction is (S)-2,3,4,5-tetrahydrodipicolinate + NAD(+) + H2O = (2S,4S)-4-hydroxy-2,3,4,5-tetrahydrodipicolinate + NADH + H(+). It carries out the reaction (S)-2,3,4,5-tetrahydrodipicolinate + NADP(+) + H2O = (2S,4S)-4-hydroxy-2,3,4,5-tetrahydrodipicolinate + NADPH + H(+). Its pathway is amino-acid biosynthesis; L-lysine biosynthesis via DAP pathway; (S)-tetrahydrodipicolinate from L-aspartate: step 4/4. Its function is as follows. Catalyzes the conversion of 4-hydroxy-tetrahydrodipicolinate (HTPA) to tetrahydrodipicolinate. In Rippkaea orientalis (strain PCC 8801 / RF-1) (Cyanothece sp. (strain PCC 8801)), this protein is 4-hydroxy-tetrahydrodipicolinate reductase.